A 421-amino-acid polypeptide reads, in one-letter code: Histidine--tRNA ligase (421 aa).

Belongs to the class-II aminoacyl-tRNA synthetase family. As to quaternary structure, homodimer.

Its subcellular location is the cytoplasm. The catalysed reaction is tRNA(His) + L-histidine + ATP = L-histidyl-tRNA(His) + AMP + diphosphate + H(+). The sequence is that of Histidine--tRNA ligase from Alkaliphilus oremlandii (strain OhILAs) (Clostridium oremlandii (strain OhILAs)).